Here is a 296-residue protein sequence, read N- to C-terminus: Enoyl-CoA hydratase domain-containing protein 2, mitochondrial (296 aa).

The transit peptide at 1 to 17 directs the protein to the mitochondrion; it reads MLRVLPRALRLPCSWRF. Lysine 101 bears the N6-acetyllysine; alternate mark. At lysine 101 the chain carries N6-succinyllysine; alternate.

It belongs to the enoyl-CoA hydratase/isomerase family.

It localises to the mitochondrion. The sequence is that of Enoyl-CoA hydratase domain-containing protein 2, mitochondrial (Echdc2) from Mus musculus (Mouse).